Reading from the N-terminus, the 641-residue chain is Isomalto-dextranase (641 aa).

The segment at residues 1–39 (MMNLSRRTLLTTGSAATLAYALGMAGSAQAATAVTARPG) is a signal peptide (tat-type signal). Asp-227 serves as the catalytic Nucleophile. Catalysis depends on Asp-288, which acts as the Proton donor. Residues 500 to 640 (TRYPAAFAAW…AINLNWIELD (141 aa)) enclose the CBM6 domain. Residues 556–588 (SGYRYANATDDNTTSKTTTKKANPEKADRSTVD) form a disordered region. Over residues 561-576 (ANATDDNTTSKTTTKK) the composition is skewed to low complexity. Positions 577-586 (ANPEKADRST) are enriched in basic and acidic residues.

Belongs to the glycosyl hydrolase 27 family. Predicted to be exported by the Tat system. The position of the signal peptide cleavage has been experimentally proven.

Its subcellular location is the secreted. It carries out the reaction Hydrolysis of (1-&gt;6)-alpha-D-glucosidic linkages in polysaccharides, to remove successive isomaltose units from the non-reducing ends of the chains.. The polypeptide is Isomalto-dextranase (imd) (Arthrobacter globiformis).